Reading from the N-terminus, the 430-residue chain is Retinoic acid receptor RXR-alpha-A (430 aa).

Residues M1–P20 show a composition bias toward low complexity. Disordered stretches follow at residues M1 to S25 and A48 to E73. The modulating stretch occupies residues M1–T99. Polar residues predominate over residues I58 to S72. A DNA-binding region (nuclear receptor) is located at residues K100 to E175. Residues C103, C106, C120, and C123 each coordinate Zn(2+). The NR C4-type zinc-finger motif lies at C103–C123. Residues K128–K133 form a nuclear localization signal region. 4 residues coordinate Zn(2+): C139, C145, C155, and C158. The NR C4-type zinc-finger motif lies at C139–C158. The span at Q174 to N186 shows a compositional bias: basic and acidic residues. The segment at Q174–E196 is disordered. The tract at residues E176–S192 is hinge. The NR LBD domain maps to N195–P426. The 9-cis-retinoate site is built by R284 and A295. All-trans-retinoate contacts are provided by R284 and A295. The tract at residues R316 to G336 is required for nuclear export. The interval I415–P426 is AF-2.

It belongs to the nuclear hormone receptor family. NR2 subfamily. As to quaternary structure, homodimer. Heterodimer; with a rar molecule. Binds DNA preferentially as a rar/rxr heterodimer.

It localises to the nucleus. Functionally, receptor for retinoic acid that acts as a transcription factor. Forms homo- or heterodimers with retinoic acid receptors (rars) and binds to target response elements in response to their ligands, all-trans or 9-cis retinoic acid, to regulate gene expression in various biological processes. The rar/rxr heterodimers bind to the retinoic acid response elements (RARE) composed of tandem 5'-AGGTCA-3' sites known as DR1-DR5 to regulate transcription. The high affinity ligand for rxrs is 9-cis retinoic acid. In the absence of ligand, the rar/rxr heterodimers associate with a multiprotein complex containing transcription corepressors that induce histone deacetylation, chromatin condensation and transcriptional suppression. On ligand binding, the corepressors dissociate from the receptors and coactivators are recruited leading to transcriptional activation. The sequence is that of Retinoic acid receptor RXR-alpha-A from Danio rerio (Zebrafish).